The primary structure comprises 152 residues: Nucleoside diphosphate kinase B (152 aa).

The interval 1–66 is interaction with AKAP13; sequence MANLERTFIA…DRPFFPGLVK (66 aa). Positions 12, 60, 88, 94, 105, and 115 each coordinate ATP. Catalysis depends on His-118, which acts as the Pros-phosphohistidine intermediate.

It belongs to the NDK family. In terms of assembly, hexamer of two different chains: An and B (A6, A5B, A4B2, A3B3, A2B4, AB5, B6). Interacts with CAPN8. Interacts with AKAP13. Interacts with ITGB1BP1 (via C-terminal domain region). Interacts with BCL2L10. Requires Mg(2+) as cofactor. Expressed in the base region of the oxyntic and pyloric mucosae.

It is found in the cytoplasm. It localises to the cell projection. The protein resides in the lamellipodium. Its subcellular location is the ruffle. The protein localises to the nucleus. It catalyses the reaction a 2'-deoxyribonucleoside 5'-diphosphate + ATP = a 2'-deoxyribonucleoside 5'-triphosphate + ADP. The catalysed reaction is a ribonucleoside 5'-diphosphate + ATP = a ribonucleoside 5'-triphosphate + ADP. The enzyme catalyses ATP + protein L-histidine = ADP + protein N-phospho-L-histidine.. In terms of biological role, major role in the synthesis of nucleoside triphosphates other than ATP. The ATP gamma phosphate is transferred to the NDP beta phosphate via a ping-pong mechanism, using a phosphorylated active-site intermediate. Negatively regulates Rho activity by interacting with AKAP13/LBC. Acts as a transcriptional activator of the MYC gene; binds DNA non-specifically. Binds to both single-stranded guanine- and cytosine-rich strands within the nuclease hypersensitive element (NHE) III(1) region of the MYC gene promoter. Does not bind to duplex NHE III(1). Has G-quadruplex (G4) DNA-binding activity, which is independent of its nucleotide-binding and kinase activity. Binds both folded and unfolded G4 with similar low nanomolar affinities. Stabilizes folded G4s regardless of whether they are prefolded or not. Exhibits histidine protein kinase activity. This Mus musculus (Mouse) protein is Nucleoside diphosphate kinase B (Nme2).